Here is a 1416-residue protein sequence, read N- to C-terminus: MKDIRDFDSLQIKLASPDTIRAWSYGEVKKPETINYRTLRPEREGLFCERIFGTTKEWECFCGKFKSIRYRGVICDRCGVEVTHFKVRRERMGHIELATPVSHIWYYRCVPSRMGLLLDLQVIALRSVLYYEKYIVIEPGDTDLKKNQLLTETEYNDAQERYGGGFTAGMGAEAIRTLLQNLDLDALVAQLREKMMEKGAKSDKRLLRRIEIVENFRVSGNKPEWMILSVIPVIPPDLRPMVQLDGGRFATSDLNDLYRRVIHRNSRLIRLMELKAPDIIIRNEKRMLQEAVDALFDNSKRKPAIKGASNRPLKSISDMLKGKQGRFRQNLLGKRVDYSGRSVIVVGPELKLWQCGLPTKMALELFKPFIMKKLVEKEIVSNIKKAKMLVEQESPKVFSVLDEVVKEHPVMLNRAPTLHRLGIQAFEPVLVEGKAIRLHPLVCKPFNADFDGDQMAVHVPLTQAAQMECWTLMLSNRNLLDPANGRTIVYPSQDMVLGLYYLTKERSLPEGARPRRFSSVEEVMMAAEKGVIGWQDQIQVRYHKCDGQLVVTTAGRLVLNEEVPAEIPFVNETLDDKRIRKLIERVFKRQDSWLAVQMLDALKTIGYTYATFFGATLSMDDIIVPEQKVQMLEKANKEVLAIASQYRGGHITQEERYNRVVEVWSKTSEELTSLMMETLERDKDGFNTIYMMATSGARGSRNQIRQLAGMRGLMAKPSGDIIELPIRSNFKEGLNVIEFFISTNGARKGLADTALKTADAGYLTRRLVDIAQDVVVNEEDCGTINGIEYRAVKSGDEIIESLAERIVGKYTLERVEHPITHELLLDVNEYIDDERAEKVEEAGVESVKLRTVLTCESKRGVCVCCYGRNLARNKIVEIGEAVGIVAAQSIGQPGTQLTMRTFHVGGTASSTTEENRITFKYPILVKSIEGVHVKMEDGSQLFTRRGTLFFHKTLAEYQLQEGDSVQVRDRARVLKDEVLYHTTDGQTVYASVSGFARIIDRTVYLVGPEQKTEIRNGSNVVIKADEYVPPGKTVATFDPFTEPILAEQDGFVRYEDIILGSTLIEEVNTETGMVERRITTLKTGIQLQPRVFISDESGNALGSYYLPEEARLMVEEGAQVKAGTVIVKLAKAIQKTSDITGGLPRVSELFEARRPKNAAVLAQISGVVSFKGLFKGKRIVVVRDHYGKEYKHLVSMSRQLLVRDGDTVEAGERLCDGCFDPHDILAILGENALQNYLMNEIRDVYRVQGVSINDQHIGLVVRQMLRKTEVVSVGDTRFIYGQQVDKYRFHEENRRVEAEGGQPAVARPMFQGITKAALNIDSFISAASFQETNKVLTNAAIAGSVDDLCGLKENVIIGHLIPAGTGMRRYRQVKLFDKNKRDLDVQMEEVIRRRKLEEEALAQAVAGMEGEPEGEA.

4 residues coordinate Zn(2+): C60, C62, C75, and C78. Mg(2+)-binding residues include D449, D451, and D453. The Zn(2+) site is built by C781, C855, C862, and C865.

The protein belongs to the RNA polymerase beta' chain family. The RNAP catalytic core consists of 2 alpha, 1 beta, 1 beta' and 1 omega subunit. When a sigma factor is associated with the core the holoenzyme is formed, which can initiate transcription. It depends on Mg(2+) as a cofactor. The cofactor is Zn(2+).

It carries out the reaction RNA(n) + a ribonucleoside 5'-triphosphate = RNA(n+1) + diphosphate. Its function is as follows. DNA-dependent RNA polymerase catalyzes the transcription of DNA into RNA using the four ribonucleoside triphosphates as substrates. The protein is DNA-directed RNA polymerase subunit beta' of Treponema pallidum (strain Nichols).